The following is a 353-amino-acid chain: S-adenosylmethionine:tRNA ribosyltransferase-isomerase (353 aa).

Belongs to the QueA family. Monomer.

It localises to the cytoplasm. It carries out the reaction 7-aminomethyl-7-carbaguanosine(34) in tRNA + S-adenosyl-L-methionine = epoxyqueuosine(34) in tRNA + adenine + L-methionine + 2 H(+). It functions in the pathway tRNA modification; tRNA-queuosine biosynthesis. In terms of biological role, transfers and isomerizes the ribose moiety from AdoMet to the 7-aminomethyl group of 7-deazaguanine (preQ1-tRNA) to give epoxyqueuosine (oQ-tRNA). This chain is S-adenosylmethionine:tRNA ribosyltransferase-isomerase, found in Rickettsia bellii (strain OSU 85-389).